We begin with the raw amino-acid sequence, 557 residues long: CDP-diacylglycerol--glycerol-3-phosphate 3-phosphatidyltransferase, mitochondrial (557 aa).

Residues 1–25 (MAAAGGAALWRRLAAWLPRGPPGLA) constitute a mitochondrion transit peptide. 121 to 128 (ASLYLGTG) provides a ligand contact to ATP. The 27-residue stretch at 212–238 (TIGLQHIKVYLFDDNVILSGANLSDLY) folds into the PLD phosphodiesterase 1 domain. Active-site residues include His217, Lys219, and Asp224. Positions 322-346 (TFHSSQQGSSMLPQHDSEASEGLKP) are disordered. Positions 323-333 (FHSSQQGSSML) are enriched in polar residues. The segment covering 336–346 (HDSEASEGLKP) has biased composition (basic and acidic residues). Residues 461-494 (AGWTFHAKGLWLYLAGSSLPCLTLIGSPNFGYRS) form the PLD phosphodiesterase 2 domain.

Belongs to the CDP-alcohol phosphatidyltransferase class-II family.

The protein resides in the mitochondrion. It catalyses the reaction a CDP-1,2-diacyl-sn-glycerol + sn-glycerol 3-phosphate = a 1,2-diacyl-sn-glycero-3-phospho-(1'-sn-glycero-3'-phosphate) + CMP + H(+). It participates in phospholipid metabolism; phosphatidylglycerol biosynthesis; phosphatidylglycerol from CDP-diacylglycerol: step 1/2. With respect to regulation, activated by calcium and magnesium and inhibited by other bivalent cations. Functions in the biosynthesis of the anionic phospholipids phosphatidylglycerol and cardiolipin. This is CDP-diacylglycerol--glycerol-3-phosphate 3-phosphatidyltransferase, mitochondrial (PGS1) from Gallus gallus (Chicken).